The sequence spans 93 residues: Large ribosomal subunit protein uL23 (93 aa).

Belongs to the universal ribosomal protein uL23 family. Part of the 50S ribosomal subunit. Contacts protein L29, and trigger factor when it is bound to the ribosome.

One of the early assembly proteins it binds 23S rRNA. One of the proteins that surrounds the polypeptide exit tunnel on the outside of the ribosome. Forms the main docking site for trigger factor binding to the ribosome. The sequence is that of Large ribosomal subunit protein uL23 from Campylobacter jejuni subsp. jejuni serotype O:6 (strain 81116 / NCTC 11828).